Reading from the N-terminus, the 1379-residue chain is DNA-directed RNA polymerase subunit beta (1379 aa).

This sequence belongs to the RNA polymerase beta chain family. In terms of assembly, the RNAP catalytic core consists of 2 alpha, 1 beta, 1 beta' and 1 omega subunit. When a sigma factor is associated with the core the holoenzyme is formed, which can initiate transcription.

It carries out the reaction RNA(n) + a ribonucleoside 5'-triphosphate = RNA(n+1) + diphosphate. DNA-dependent RNA polymerase catalyzes the transcription of DNA into RNA using the four ribonucleoside triphosphates as substrates. The protein is DNA-directed RNA polymerase subunit beta of Campylobacter fetus subsp. fetus (strain 82-40).